We begin with the raw amino-acid sequence, 198 residues long: Translation initiation factor IF-3 (198 aa).

The interval 168 to 198 is disordered; sequence SLAPKKAGSPKKAETDTAKKENPKKAVETKE. Over residues 178-198 the composition is skewed to basic and acidic residues; that stretch reads KKAETDTAKKENPKKAVETKE.

This sequence belongs to the IF-3 family. Monomer.

It is found in the cytoplasm. Its function is as follows. IF-3 binds to the 30S ribosomal subunit and shifts the equilibrium between 70S ribosomes and their 50S and 30S subunits in favor of the free subunits, thus enhancing the availability of 30S subunits on which protein synthesis initiation begins. The chain is Translation initiation factor IF-3 from Phocaeicola vulgatus (strain ATCC 8482 / DSM 1447 / JCM 5826 / CCUG 4940 / NBRC 14291 / NCTC 11154) (Bacteroides vulgatus).